Consider the following 329-residue polypeptide: Probable ABC transporter permease protein MG188 (329 aa).

Transmembrane regions (helical) follow at residues 30 to 50 (FLLF…PFFL), 96 to 116 (LISL…IVFV), 128 to 148 (VFFL…VYIF), 176 to 196 (ALWA…VLII), 234 to 254 (LIFL…LALF), and 283 to 303 (NLAG…GLVL). Positions 88–303 (LRNSFLYSLI…VLGVCYGLVL (216 aa)) constitute an ABC transmembrane type-1 domain.

It belongs to the binding-protein-dependent transport system permease family. MalFG subfamily.

The protein localises to the cell membrane. Probably part of a binding-protein-dependent transport system. Probably responsible for the translocation of the substrate across the membrane. This is Probable ABC transporter permease protein MG188 from Mycoplasma genitalium (strain ATCC 33530 / DSM 19775 / NCTC 10195 / G37) (Mycoplasmoides genitalium).